The following is a 291-amino-acid chain: Ajmaline N-methyltransferase (291 aa).

The tract at residues 71–80 (MLDVGCGIGG) is SAM motif I. The Vacuolar targeting signal signature appears at 133–139 (DGAFDLV). The segment at 134 to 142 (GAFDLVLSI) is SAM motif II. Residues 161–170 (VAASGATIII) are SAM motif III.

It belongs to the class I-like SAM-binding methyltransferase superfamily. gTMT family. In terms of assembly, homodimer. Mainly expressed in roots, but barely detectable in stems and flowers.

Its subcellular location is the vacuole membrane. The catalysed reaction is ajmaline + S-adenosyl-L-methionine = 4-methylajmaline + S-adenosyl-L-homocysteine + H(+). The enzyme catalyses norajmaline + S-adenosyl-L-methionine = 4-methylnorajmaline + S-adenosyl-L-homocysteine + H(+). The protein operates within alkaloid biosynthesis; ajmaline biosynthesis. Its function is as follows. N-methyltransferase involved in the biosynthesis of ajmaline-type monoterpenoid indole alkaloids (MIAs) natural products, important plant-derived pharmaceuticals used in the therapy of heart disorders. Catalyzes the indole N-methylation of ajmaline to produce 4-methylajmaline. Also able, with a lower efficiency, to mediates the conversion of norajmaline to 4-methylnorajmaline. The chain is Ajmaline N-methyltransferase from Rauvolfia serpentina (Serpentine wood).